A 225-amino-acid polypeptide reads, in one-letter code: Phosphoserine phosphatase (225 aa).

An N-acetylmethionine modification is found at Met-1. The Nucleophile role is filled by Asp-20. Mg(2+)-binding residues include Asp-20 and Asp-22. 20-22 (DVD) contributes to the L-serine binding site. Asp-22 acts as the Proton donor in catalysis. Met-52 contacts O-phospho-L-serine. Phosphate is bound at residue Gly-53. L-serine is bound by residues 109-111 (SGG) and Lys-158. O-phospho-L-serine contacts are provided by residues 109 to 111 (SGG) and Lys-158. Asp-179 provides a ligand contact to Mg(2+). Residue Thr-182 participates in O-phospho-L-serine binding. Thr-182 lines the phosphate pocket.

The protein belongs to the HAD-like hydrolase superfamily. SerB family. Homodimer. Mg(2+) is required as a cofactor.

It is found in the cytoplasm. It localises to the cytosol. The catalysed reaction is O-phospho-L-serine + H2O = L-serine + phosphate. It catalyses the reaction O-phospho-D-serine + H2O = D-serine + phosphate. The protein operates within amino-acid biosynthesis; L-serine biosynthesis; L-serine from 3-phospho-D-glycerate: step 3/3. Its function is as follows. Catalyzes the last irreversible step in the biosynthesis of L-serine from carbohydrates, the dephosphorylation of O-phospho-L-serine to L-serine. L-serine can then be used in protein synthesis, to produce other amino acids, in nucleotide metabolism or in glutathione synthesis, or can be racemized to D-serine, a neuromodulator. May also act on O-phospho-D-serine. The chain is Phosphoserine phosphatase from Bos taurus (Bovine).